A 572-amino-acid polypeptide reads, in one-letter code: Delta-1-pyrroline-5-carboxylate dehydrogenase, mitochondrial (572 aa).

300-305 (GQISTR) lines the NAD(+) pocket. Catalysis depends on E320, which acts as the Proton acceptor. The Nucleophile role is filled by C354.

Belongs to the aldehyde dehydrogenase family.

Its subcellular location is the mitochondrion matrix. The enzyme catalyses L-glutamate 5-semialdehyde + NAD(+) + H2O = L-glutamate + NADH + 2 H(+). Its pathway is amino-acid degradation; L-proline degradation into L-glutamate; L-glutamate from L-proline: step 2/2. In Emericella nidulans (strain FGSC A4 / ATCC 38163 / CBS 112.46 / NRRL 194 / M139) (Aspergillus nidulans), this protein is Delta-1-pyrroline-5-carboxylate dehydrogenase, mitochondrial (prnC).